The primary structure comprises 431 residues: Adenylosuccinate synthetase (431 aa).

GTP is bound by residues 12–18 (GDEGKGK) and 40–42 (GHT). Asp13 (proton acceptor) is an active-site residue. Residues Asp13 and Gly40 each coordinate Mg(2+). IMP contacts are provided by residues 13–16 (DEGK), 38–41 (NAGH), Thr131, Arg145, Gln225, Thr240, and Arg304. The active-site Proton donor is His41. 300–306 (TNTGRRR) serves as a coordination point for substrate. GTP is bound by residues Arg306, 332–334 (KLD), and 414–416 (STS).

Belongs to the adenylosuccinate synthetase family. Homodimer. Requires Mg(2+) as cofactor.

It is found in the cytoplasm. It catalyses the reaction IMP + L-aspartate + GTP = N(6)-(1,2-dicarboxyethyl)-AMP + GDP + phosphate + 2 H(+). The protein operates within purine metabolism; AMP biosynthesis via de novo pathway; AMP from IMP: step 1/2. Its function is as follows. Plays an important role in the de novo pathway of purine nucleotide biosynthesis. Catalyzes the first committed step in the biosynthesis of AMP from IMP. This Methylocella silvestris (strain DSM 15510 / CIP 108128 / LMG 27833 / NCIMB 13906 / BL2) protein is Adenylosuccinate synthetase.